The primary structure comprises 700 residues: Elongation factor G (700 aa).

One can recognise a tr-type G domain in the interval 8 to 290 (ERYRNIGISA…AVIDYLPSPV (283 aa)). GTP is bound by residues 17–24 (AHIDAGKT), 88–92 (DTPGH), and 142–145 (NKMD).

This sequence belongs to the TRAFAC class translation factor GTPase superfamily. Classic translation factor GTPase family. EF-G/EF-2 subfamily.

It localises to the cytoplasm. Functionally, catalyzes the GTP-dependent ribosomal translocation step during translation elongation. During this step, the ribosome changes from the pre-translocational (PRE) to the post-translocational (POST) state as the newly formed A-site-bound peptidyl-tRNA and P-site-bound deacylated tRNA move to the P and E sites, respectively. Catalyzes the coordinated movement of the two tRNA molecules, the mRNA and conformational changes in the ribosome. The polypeptide is Elongation factor G (Paracidovorax citrulli (strain AAC00-1) (Acidovorax citrulli)).